Here is a 411-residue protein sequence, read N- to C-terminus: C6 finger domain transcription factor hasA (411 aa).

Positions 1-17 are enriched in polar residues; sequence MTSTLPYLTSPPATHPS. The interval 1–21 is disordered; sequence MTSTLPYLTSPPATHPSNSDH. Positions 28 to 54 form a DNA-binding region, zn(2)-C6 fungal-type; sequence CDSCHQCKVKCSGGSPCFRCTSKGLNC.

Its subcellular location is the nucleus. Functionally, transcription factor; part of the gene cluster that mediates the biosynthesis of hexadehydro-astechrome (HAS), a tryptophan-derived iron(III)-complex that acts as a virulence factor in infected mice. Positively regulates the expression of the HAS biosynthetic genes. The polypeptide is C6 finger domain transcription factor hasA (Aspergillus fumigatus (strain CBS 144.89 / FGSC A1163 / CEA10) (Neosartorya fumigata)).